A 409-amino-acid polypeptide reads, in one-letter code: Dual-specificity RNA methyltransferase RlmN (409 aa).

Residue Glu-117 is the Proton acceptor of the active site. The region spanning 128–377 (LNGRKTLCIS…CTIRQTRGDD (250 aa)) is the Radical SAM core domain. A disulfide bond links Cys-135 and Cys-382. Residues Cys-142, Cys-146, and Cys-149 each contribute to the [4Fe-4S] cluster site. S-adenosyl-L-methionine is bound by residues 205–206 (GE), Ser-237, 259–261 (SLH), and Asn-339. Cys-382 serves as the catalytic S-methylcysteine intermediate.

This sequence belongs to the radical SAM superfamily. RlmN family. [4Fe-4S] cluster serves as cofactor.

The protein resides in the cytoplasm. It catalyses the reaction adenosine(2503) in 23S rRNA + 2 reduced [2Fe-2S]-[ferredoxin] + 2 S-adenosyl-L-methionine = 2-methyladenosine(2503) in 23S rRNA + 5'-deoxyadenosine + L-methionine + 2 oxidized [2Fe-2S]-[ferredoxin] + S-adenosyl-L-homocysteine. It carries out the reaction adenosine(37) in tRNA + 2 reduced [2Fe-2S]-[ferredoxin] + 2 S-adenosyl-L-methionine = 2-methyladenosine(37) in tRNA + 5'-deoxyadenosine + L-methionine + 2 oxidized [2Fe-2S]-[ferredoxin] + S-adenosyl-L-homocysteine. Specifically methylates position 2 of adenine 2503 in 23S rRNA and position 2 of adenine 37 in tRNAs. m2A2503 modification seems to play a crucial role in the proofreading step occurring at the peptidyl transferase center and thus would serve to optimize ribosomal fidelity. The protein is Dual-specificity RNA methyltransferase RlmN of Psychrobacter arcticus (strain DSM 17307 / VKM B-2377 / 273-4).